Consider the following 704-residue polypeptide: Elongation factor G (704 aa).

Residues 8–290 (ARYRNIGISA…AVIDYLPSPV (283 aa)) form the tr-type G domain. GTP-binding positions include 17–24 (AHIDAGKT), 88–92 (DTPGH), and 142–145 (NKMD). Residues K504 and K643 each carry the N6-acetyllysine modification.

Belongs to the TRAFAC class translation factor GTPase superfamily. Classic translation factor GTPase family. EF-G/EF-2 subfamily.

Its subcellular location is the cytoplasm. Functionally, catalyzes the GTP-dependent ribosomal translocation step during translation elongation. During this step, the ribosome changes from the pre-translocational (PRE) to the post-translocational (POST) state as the newly formed A-site-bound peptidyl-tRNA and P-site-bound deacylated tRNA move to the P and E sites, respectively. Catalyzes the coordinated movement of the two tRNA molecules, the mRNA and conformational changes in the ribosome. The polypeptide is Elongation factor G (Shigella sonnei (strain Ss046)).